The chain runs to 479 residues: Proline--tRNA ligase (479 aa).

Belongs to the class-II aminoacyl-tRNA synthetase family. ProS type 3 subfamily. Homodimer.

The protein resides in the cytoplasm. It carries out the reaction tRNA(Pro) + L-proline + ATP = L-prolyl-tRNA(Pro) + AMP + diphosphate. In terms of biological role, catalyzes the attachment of proline to tRNA(Pro) in a two-step reaction: proline is first activated by ATP to form Pro-AMP and then transferred to the acceptor end of tRNA(Pro). The chain is Proline--tRNA ligase from Mesomycoplasma hyopneumoniae (strain J / ATCC 25934 / NCTC 10110) (Mycoplasma hyopneumoniae).